The sequence spans 421 residues: Glutamate dehydrogenase (421 aa).

The active site involves Lys105. 220–226 (GYGNAGY) is a binding site for NAD(+).

This sequence belongs to the Glu/Leu/Phe/Val dehydrogenases family. In terms of assembly, homohexamer.

The protein resides in the cytoplasm. The protein localises to the chromosome. The enzyme catalyses L-glutamate + NAD(+) + H2O = 2-oxoglutarate + NH4(+) + NADH + H(+). It catalyses the reaction L-glutamate + NADP(+) + H2O = 2-oxoglutarate + NH4(+) + NADPH + H(+). This is Glutamate dehydrogenase (gdhA) from Thermococcus kodakarensis (strain ATCC BAA-918 / JCM 12380 / KOD1) (Pyrococcus kodakaraensis (strain KOD1)).